The sequence spans 120 residues: Movement protein TGB2 (120 aa).

The Cytoplasmic segment spans residues 1 to 8; sequence MPFAQPPD. The chain crosses the membrane as a helical span at residues 9–29; the sequence is YSKSVFPIAVGIAVAVVLFTL. The Lumenal portion of the chain corresponds to 30 to 71; that stretch reads TRSTLPQVGDNIHNLPHGGNYQDGTKRISYCGPRDSFPSSSL. A helical membrane pass occupies residues 72–92; that stretch reads ISSGTPMIIGIIIFLIFAIYV. Residues 93–120 lie on the Cytoplasmic side of the membrane; it reads SEKWSRSGSRRCSCCVPGAPACTATVHE.

Belongs to the Tymovirales TGBp2 protein family.

Its subcellular location is the host endoplasmic reticulum membrane. Plays a role in viral cell-to-cell propagation, by facilitating genome transport to neighboring plant cells through plasmosdesmata,. The polypeptide is Movement protein TGB2 (Crataegus (hawthorn)).